A 185-amino-acid chain; its full sequence is Large ribosomal subunit protein uL5 (185 aa).

It belongs to the universal ribosomal protein uL5 family. Part of the 50S ribosomal subunit; part of the 5S rRNA/L5/L18/L25 subcomplex. Contacts the 5S rRNA and the P site tRNA. Forms a bridge to the 30S subunit in the 70S ribosome.

This is one of the proteins that bind and probably mediate the attachment of the 5S RNA into the large ribosomal subunit, where it forms part of the central protuberance. In the 70S ribosome it contacts protein S13 of the 30S subunit (bridge B1b), connecting the 2 subunits; this bridge is implicated in subunit movement. Contacts the P site tRNA; the 5S rRNA and some of its associated proteins might help stabilize positioning of ribosome-bound tRNAs. This chain is Large ribosomal subunit protein uL5, found in Brucella abortus (strain 2308).